The chain runs to 468 residues: 3-isopropylmalate dehydratase large subunit (468 aa).

3 residues coordinate [4Fe-4S] cluster: Cys349, Cys409, and Cys412.

Belongs to the aconitase/IPM isomerase family. LeuC type 1 subfamily. Heterodimer of LeuC and LeuD. The cofactor is [4Fe-4S] cluster.

The enzyme catalyses (2R,3S)-3-isopropylmalate = (2S)-2-isopropylmalate. It participates in amino-acid biosynthesis; L-leucine biosynthesis; L-leucine from 3-methyl-2-oxobutanoate: step 2/4. Its function is as follows. Catalyzes the isomerization between 2-isopropylmalate and 3-isopropylmalate, via the formation of 2-isopropylmaleate. This chain is 3-isopropylmalate dehydratase large subunit, found in Shewanella baltica (strain OS155 / ATCC BAA-1091).